A 349-amino-acid chain; its full sequence is Twinfilin-2 (349 aa).

Position 2 is an N-acetylalanine (Ala2). ADF-H domains lie at 4–139 (QTGI…KHLS) and 177–313 (GLAF…DEVH). Residue Lys14 is modified to N6-acetyllysine. Position 309 is a phosphotyrosine (Tyr309). Residues 322 to 349 (AFAKPKGPGGKRGHKRLIRGPGENGDDS) form a disordered region. Over residues 330–339 (GGKRGHKRLI) the composition is skewed to basic residues. The residue at position 349 (Ser349) is a Phosphoserine.

Belongs to the actin-binding proteins ADF family. Twinfilin subfamily. As to quaternary structure, interacts with G-actin; ADP-actin form and capping protein (CP). May also be able to interact with TWF1 and phosphoinositides, PI(4,5)P2. When bound to PI(4,5)P2, it is down-regulated. Interacts with MYO7A. In terms of processing, in vitro, phosphorylated by PRKCZ, CK2 and SRC. In terms of tissue distribution, ubiquitously expressed (at protein level).

It is found in the cytoplasm. It localises to the cytoskeleton. Its subcellular location is the perinuclear region. The protein resides in the cell projection. The protein localises to the stereocilium. Its function is as follows. Actin-binding protein involved in motile and morphological processes. Inhibits actin polymerization, likely by sequestering G-actin. By capping the barbed ends of filaments, it also regulates motility. Seems to play an important role in clathrin-mediated endocytosis and distribution of endocytic organelles. May play a role in regulating the mature length of the middle and short rows of stereocilia. The polypeptide is Twinfilin-2 (TWF2) (Homo sapiens (Human)).